Consider the following 165-residue polypeptide: Neuritin-like protein (165 aa).

Positions 1 to 35 are cleaved as a signal peptide; it reads MMRCCRRRCCCRQPPHALRPLLLLPLVLLPPLAAA. Residue A139 is the site of GPI-anchor amidated alanine attachment. Residues 140–165 constitute a propeptide, removed in mature form; it reads PALPMAPAPPLLAAALALAYLLRPLA.

Belongs to the neuritin family.

The protein localises to the cell membrane. The polypeptide is Neuritin-like protein (NRN1L) (Homo sapiens (Human)).